Consider the following 182-residue polypeptide: Large ribosomal subunit protein uL5m (182 aa).

This sequence belongs to the universal ribosomal protein uL5 family.

Its subcellular location is the mitochondrion. The polypeptide is Large ribosomal subunit protein uL5m (RPL5) (Reclinomonas americana).